The following is an 807-amino-acid chain: Phenylalanine--tRNA ligase beta subunit (807 aa).

The tRNA-binding domain occupies 39 to 156 (AGEFSGVVIG…SDAPLGQCVR (118 aa)). A B5 domain is found at 409-488 (PQTKDVNLRR…RIFGYNNIPN (80 aa)). Mg(2+)-binding residues include D466, D472, E475, and E476. Residues 713-806 (SRFPANRRDL…LKTELNASLR (94 aa)) enclose the FDX-ACB domain.

This sequence belongs to the phenylalanyl-tRNA synthetase beta subunit family. Type 1 subfamily. As to quaternary structure, tetramer of two alpha and two beta subunits. The cofactor is Mg(2+).

It localises to the cytoplasm. The enzyme catalyses tRNA(Phe) + L-phenylalanine + ATP = L-phenylalanyl-tRNA(Phe) + AMP + diphosphate + H(+). This Colwellia psychrerythraea (strain 34H / ATCC BAA-681) (Vibrio psychroerythus) protein is Phenylalanine--tRNA ligase beta subunit.